The chain runs to 611 residues: Threonine--tRNA ligase (611 aa).

Residues Asp-209–Pro-502 are catalytic. Zn(2+) contacts are provided by Cys-302, His-353, and His-479.

Belongs to the class-II aminoacyl-tRNA synthetase family. In terms of assembly, homodimer. Zn(2+) serves as cofactor.

It localises to the cytoplasm. The catalysed reaction is tRNA(Thr) + L-threonine + ATP = L-threonyl-tRNA(Thr) + AMP + diphosphate + H(+). In terms of biological role, catalyzes the attachment of threonine to tRNA(Thr) in a two-step reaction: L-threonine is first activated by ATP to form Thr-AMP and then transferred to the acceptor end of tRNA(Thr). Also edits incorrectly charged L-seryl-tRNA(Thr). This Synechococcus sp. (strain CC9902) protein is Threonine--tRNA ligase.